The following is a 429-amino-acid chain: Histidinol dehydrogenase (429 aa).

Residues Tyr130, Gln191, and Asn214 each contribute to the NAD(+) site. Substrate-binding residues include Ser237, Gln259, and His262. Residues Gln259 and His262 each contribute to the Zn(2+) site. Catalysis depends on proton acceptor residues Glu327 and His328. Residues His328, Asp361, Glu415, and His420 each contribute to the substrate site. Residue Asp361 coordinates Zn(2+). His420 is a Zn(2+) binding site.

Belongs to the histidinol dehydrogenase family. Zn(2+) serves as cofactor.

The enzyme catalyses L-histidinol + 2 NAD(+) + H2O = L-histidine + 2 NADH + 3 H(+). Its pathway is amino-acid biosynthesis; L-histidine biosynthesis; L-histidine from 5-phospho-alpha-D-ribose 1-diphosphate: step 9/9. Its function is as follows. Catalyzes the sequential NAD-dependent oxidations of L-histidinol to L-histidinaldehyde and then to L-histidine. The protein is Histidinol dehydrogenase of Nitrobacter winogradskyi (strain ATCC 25391 / DSM 10237 / CIP 104748 / NCIMB 11846 / Nb-255).